A 360-amino-acid chain; its full sequence is Phospho-N-acetylmuramoyl-pentapeptide-transferase (360 aa).

Transmembrane regions (helical) follow at residues 26–46 (AIVS…RMIA), 72–92 (PTMG…LWAY), 94–114 (SNPY…IGFV), 132–152 (WKYF…YLAG), 168–188 (VMPQ…VGTG), 199–219 (GLAI…AWAT), 236–256 (AGEL…FLWF), 263–283 (VFMG…IAVL), 288–308 (FLLV…ILQV), and 338–358 (VIVR…ATLK).

It belongs to the glycosyltransferase 4 family. MraY subfamily. Requires Mg(2+) as cofactor.

It is found in the cell inner membrane. The enzyme catalyses UDP-N-acetyl-alpha-D-muramoyl-L-alanyl-gamma-D-glutamyl-meso-2,6-diaminopimeloyl-D-alanyl-D-alanine + di-trans,octa-cis-undecaprenyl phosphate = di-trans,octa-cis-undecaprenyl diphospho-N-acetyl-alpha-D-muramoyl-L-alanyl-D-glutamyl-meso-2,6-diaminopimeloyl-D-alanyl-D-alanine + UMP. It functions in the pathway cell wall biogenesis; peptidoglycan biosynthesis. Its function is as follows. Catalyzes the initial step of the lipid cycle reactions in the biosynthesis of the cell wall peptidoglycan: transfers peptidoglycan precursor phospho-MurNAc-pentapeptide from UDP-MurNAc-pentapeptide onto the lipid carrier undecaprenyl phosphate, yielding undecaprenyl-pyrophosphoryl-MurNAc-pentapeptide, known as lipid I. The protein is Phospho-N-acetylmuramoyl-pentapeptide-transferase of Enterobacter sp. (strain 638).